The sequence spans 256 residues: Pro-opiomelanocortin (256 aa).

An N-terminal signal peptide occupies residues 1-26; that stretch reads MPRSCYSRSGTLLLALLLQISMEVRG. Cysteines 28 and 50 form a disulfide. T71 is a glycosylation site (O-linked (GalNAc...) threonine). F87 carries the post-translational modification Phenylalanine amide. The tract at residues 88–120 is disordered; the sequence is GRGNSSGASQKREEEAAAADPGFHGDGVEPGLR. N91 carries N-linked (GlcNAc...) asparagine glycosylation. Residues 100-122 constitute a propeptide that is removed on maturation; that stretch reads EEEAAAADPGFHGDGVEPGLRED. Position 125 is an N-acetylserine; in Corticotropin (S125). At V137 the chain carries Valine amide. S155 is subject to Phosphoserine.

Belongs to the POMC family. In terms of processing, specific enzymatic cleavages at paired basic residues yield the different active peptides. In terms of tissue distribution, ACTH and MSH are produced by the pituitary gland.

The protein resides in the secreted. In terms of biological role, ACTH stimulates the adrenal glands to release cortisol. Functionally, MSH (melanocyte-stimulating hormone) increases the pigmentation of skin by increasing melanin production in melanocytes. Its function is as follows. Beta-endorphin and Met-enkephalin are endogenous opiates. Stimulates the adrenal glands to release cortisol. In terms of biological role, anorexigenic peptide. Increases the pigmentation of skin by increasing melanin production in melanocytes. Functionally, increases the pigmentation of skin by increasing melanin production in melanocytes. Its function is as follows. Endogenous orexigenic opiate. Endogenous opiate. The polypeptide is Pro-opiomelanocortin (POMC) (Cavia porcellus (Guinea pig)).